A 267-amino-acid chain; its full sequence is Proteasome subunit alpha (267 aa).

Positions Glu-231–Asp-267 are disordered. The span at Leu-234–Asp-267 shows a compositional bias: basic and acidic residues.

This sequence belongs to the peptidase T1A family. In terms of assembly, the 20S proteasome core is composed of 14 alpha and 14 beta subunits that assemble into four stacked heptameric rings, resulting in a barrel-shaped structure. The two inner rings, each composed of seven catalytic beta subunits, are sandwiched by two outer rings, each composed of seven alpha subunits. The catalytic chamber with the active sites is on the inside of the barrel. Has a gated structure, the ends of the cylinder being occluded by the N-termini of the alpha-subunits. Is capped by the proteasome-associated ATPase, ARC.

It localises to the cytoplasm. Its pathway is protein degradation; proteasomal Pup-dependent pathway. Its activity is regulated as follows. The formation of the proteasomal ATPase ARC-20S proteasome complex, likely via the docking of the C-termini of ARC into the intersubunit pockets in the alpha-rings, may trigger opening of the gate for substrate entry. Interconversion between the open-gate and close-gate conformations leads to a dynamic regulation of the 20S proteasome proteolysis activity. Functionally, component of the proteasome core, a large protease complex with broad specificity involved in protein degradation. This Mycobacterium marinum (strain ATCC BAA-535 / M) protein is Proteasome subunit alpha.